The sequence spans 347 residues: NADH-ubiquinone oxidoreductase chain 2 (347 aa).

The next 10 membrane-spanning stretches (helical) occupy residues 13–33 (IFAGTLITALSSHWFFAWVGL), 55–75 (AAIKYFLTQATASMILLMAIL), 96–116 (LMIVVAMAMKLGMAPFHFWVP), 123–143 (PLMSGLLLLTWQKLAPMSIMY), 150–170 (NVSLLLTLSILSILAGSWGGL), 178–198 (ILAYSSITHVGWMMAVLPYNP), 201–221 (TILNLTIYIILTTTTFLLLNL), 247–267 (TLLSLGGLPPLTGFLPKWLII), 277–297 (ITPTIMAIITLLNLYFYLRLI), and 325–345 (FLPTLITLTTLLLPISPFMLM).

It belongs to the complex I subunit 2 family. Core subunit of respiratory chain NADH dehydrogenase (Complex I) which is composed of 45 different subunits. Interacts with TMEM242.

The protein resides in the mitochondrion inner membrane. The enzyme catalyses a ubiquinone + NADH + 5 H(+)(in) = a ubiquinol + NAD(+) + 4 H(+)(out). In terms of biological role, core subunit of the mitochondrial membrane respiratory chain NADH dehydrogenase (Complex I) which catalyzes electron transfer from NADH through the respiratory chain, using ubiquinone as an electron acceptor. Essential for the catalytic activity and assembly of complex I. The polypeptide is NADH-ubiquinone oxidoreductase chain 2 (Gorilla gorilla gorilla (Western lowland gorilla)).